We begin with the raw amino-acid sequence, 136 residues long: Large ribosomal subunit protein uL16 (136 aa).

The protein belongs to the universal ribosomal protein uL16 family. Part of the 50S ribosomal subunit.

In terms of biological role, binds 23S rRNA and is also seen to make contacts with the A and possibly P site tRNAs. The chain is Large ribosomal subunit protein uL16 from Sodalis glossinidius (strain morsitans).